Here is a 344-residue protein sequence, read N- to C-terminus: L-rhamnose-proton symporter (344 aa).

10 helical membrane-spanning segments follow: residues 4–24 (AITM…CFYA), 38–58 (WSVG…ALLL), 68–88 (FSLS…IGNI), 101–121 (MGIG…TPII), 137–157 (TLLG…AGQL), 175–195 (LVLA…MNAA), 214–234 (LPSY…FCFI), 259–279 (VLLS…YAWG), 290–310 (ISWM…GLVL), and 323–343 (VLSL…IGMA).

This sequence belongs to the L-rhamnose transporter (TC 2.A.7.6) family.

The protein localises to the cell inner membrane. It catalyses the reaction L-rhamnopyranose(in) + H(+)(in) = L-rhamnopyranose(out) + H(+)(out). Functionally, uptake of L-rhamnose across the cytoplasmic membrane with the concomitant transport of protons into the cell (symport system). This Shigella flexneri protein is L-rhamnose-proton symporter.